Here is a 194-residue protein sequence, read N- to C-terminus: Peptidyl-tRNA hydrolase (194 aa).

Tyrosine 19 serves as a coordination point for tRNA. Histidine 24 (proton acceptor) is an active-site residue. Residues phenylalanine 69, asparagine 71, and asparagine 117 each contribute to the tRNA site.

The protein belongs to the PTH family. In terms of assembly, monomer.

The protein localises to the cytoplasm. It catalyses the reaction an N-acyl-L-alpha-aminoacyl-tRNA + H2O = an N-acyl-L-amino acid + a tRNA + H(+). Hydrolyzes ribosome-free peptidyl-tRNAs (with 1 or more amino acids incorporated), which drop off the ribosome during protein synthesis, or as a result of ribosome stalling. In terms of biological role, catalyzes the release of premature peptidyl moieties from peptidyl-tRNA molecules trapped in stalled 50S ribosomal subunits, and thus maintains levels of free tRNAs and 50S ribosomes. The sequence is that of Peptidyl-tRNA hydrolase from Neorickettsia sennetsu (strain ATCC VR-367 / Miyayama) (Ehrlichia sennetsu).